A 461-amino-acid chain; its full sequence is tRNA(Ile)-lysidine synthase (461 aa).

26–31 (SGGPDS) lines the ATP pocket.

This sequence belongs to the tRNA(Ile)-lysidine synthase family.

It localises to the cytoplasm. The enzyme catalyses cytidine(34) in tRNA(Ile2) + L-lysine + ATP = lysidine(34) in tRNA(Ile2) + AMP + diphosphate + H(+). Its function is as follows. Ligates lysine onto the cytidine present at position 34 of the AUA codon-specific tRNA(Ile) that contains the anticodon CAU, in an ATP-dependent manner. Cytidine is converted to lysidine, thus changing the amino acid specificity of the tRNA from methionine to isoleucine. The protein is tRNA(Ile)-lysidine synthase of Clostridium acetobutylicum (strain ATCC 824 / DSM 792 / JCM 1419 / IAM 19013 / LMG 5710 / NBRC 13948 / NRRL B-527 / VKM B-1787 / 2291 / W).